Here is a 187-residue protein sequence, read N- to C-terminus: UPF0301 protein HS_0009 (187 aa).

This sequence belongs to the UPF0301 (AlgH) family.

This chain is UPF0301 protein HS_0009, found in Histophilus somni (strain 129Pt) (Haemophilus somnus).